The sequence spans 213 residues: UPF0301 protein Aave_0907 (213 aa).

Residues 93 to 120 form a disordered region; that stretch reads MGPSSGKQAAGEGGAQAEGEGAEESAYA.

Belongs to the UPF0301 (AlgH) family.

The polypeptide is UPF0301 protein Aave_0907 (Paracidovorax citrulli (strain AAC00-1) (Acidovorax citrulli)).